Reading from the N-terminus, the 659-residue chain is PAN2-PAN3 deadenylation complex subunit PAN3 (659 aa).

2 disordered regions span residues 1–26 and 103–132; these read MASA…AREN and PKAA…QENI. Residues 26 to 55 form a C3H1-type zinc finger; it reads NAKDTLCRNVTIYGRCRYEDKGCAFNHDPL. Over residues 115-132 the composition is skewed to polar residues; sequence SVASRSNTSTPNSRQENI. A pseudokinase domain region spans residues 262–522; sequence QTLPNTQLPA…NIDIFITGIS (261 aa). ATP-binding positions include arginine 314, 363–370, and 422–423; these read DYYPLSKT and SK. Residues 523–561 are a coiled coil; the sequence is SQLMSTFDSALHLDDQLTSDLSRELENGRLVRLMTKLNL. The interval 562-659 is knob domain; it reads VNERPEYEHD…ALLKPARRMH (98 aa).

It belongs to the protein kinase superfamily. PAN3 family. Homodimer. Forms a heterotrimer with a catalytic subunit pan2 to form the poly(A)-nuclease (PAN) deadenylation complex. Interacts (via PAM-2 motif) with poly(A)-binding protein pab1 (via PABC domain), conferring substrate specificity of the enzyme complex.

The protein localises to the cytoplasm. Functionally, regulatory subunit of the poly(A)-nuclease (PAN) deadenylation complex, one of two cytoplasmic mRNA deadenylases involved in mRNA turnover. PAN specifically shortens poly(A) tails of RNA and the activity is stimulated by poly(A)-binding protein pab1. PAN deadenylation is followed by rapid degradation of the shortened mRNA tails by the CCR4-NOT complex. Deadenylated mRNAs are then degraded by two alternative mechanisms, namely exosome-mediated 3'-5' exonucleolytic degradation, or deadenylation-dependent mRNA decaping and subsequent 5'-3' exonucleolytic degradation by xrn1. May also be involved in post-transcriptional maturation of mRNA poly(A) tails. pan3 acts as a positive regulator for PAN activity, recruiting the catalytic subunit pan2 to mRNA via its interaction with RNA and with pab1. The chain is PAN2-PAN3 deadenylation complex subunit PAN3 from Aspergillus clavatus (strain ATCC 1007 / CBS 513.65 / DSM 816 / NCTC 3887 / NRRL 1 / QM 1276 / 107).